Reading from the N-terminus, the 283-residue chain is Glutamate racemase (283 aa).

Substrate is bound by residues 28-29 (DS) and 60-61 (YG). C92 functions as the Proton donor/acceptor in the catalytic mechanism. 93 to 94 (NS) is a substrate binding site. Catalysis depends on C204, which acts as the Proton donor/acceptor. 205–206 (TH) lines the substrate pocket.

The protein belongs to the aspartate/glutamate racemases family.

The catalysed reaction is L-glutamate = D-glutamate. Its pathway is cell wall biogenesis; peptidoglycan biosynthesis. Provides the (R)-glutamate required for cell wall biosynthesis. This Erwinia tasmaniensis (strain DSM 17950 / CFBP 7177 / CIP 109463 / NCPPB 4357 / Et1/99) protein is Glutamate racemase.